The primary structure comprises 115 residues: Large ribosomal subunit protein bL19 (115 aa).

This sequence belongs to the bacterial ribosomal protein bL19 family.

In terms of biological role, this protein is located at the 30S-50S ribosomal subunit interface and may play a role in the structure and function of the aminoacyl-tRNA binding site. The chain is Large ribosomal subunit protein bL19 from Wigglesworthia glossinidia brevipalpis.